We begin with the raw amino-acid sequence, 1210 residues long: Homeodomain-interacting protein kinase 1 (1210 aa).

Lys-25 participates in a covalent cross-link: Glycyl lysine isopeptide (Lys-Gly) (interchain with G-Cter in SUMO); alternate. Lys-25 is covalently cross-linked (Glycyl lysine isopeptide (Lys-Gly) (interchain with G-Cter in SUMO2); alternate). Residues Lys-120 and Lys-124 each participate in a glycyl lysine isopeptide (Lys-Gly) (interchain with G-Cter in SUMO2) cross-link. The 329-residue stretch at 190-518 (YEVLEFLGRG…PLKTLNHQFV (329 aa)) folds into the Protein kinase domain. Residues 196–204 (LGRGTFGQV) and Lys-219 contribute to the ATP site. Asp-315 serves as the catalytic Proton acceptor. The disordered stretch occupies residues 835–856 (QQQSSSLPSKKNKQSAPVSSKS). A Nuclear localization signal 1 (NLS1) motif is present at residues 844–847 (KKNK). Ser-872 bears the Phosphoserine mark. The segment at 885–1093 (PVQDQHQPII…FQHGSPLHST (209 aa)) is interaction with TP53. The tract at residues 891-998 (QPIIIPDTPS…PLKTQLGDCT (108 aa)) is required for localization to nuclear speckles. Residues 902-926 (PVSVITIRSDTDEEEDNKYKPNSSS) form an SUMO interaction motifs (SIM); required for nuclear localization and kinase activity region. The disordered stretch occupies residues 938–981 (TVNDSPDSDSSLSSPHPTDTLSALRGNSGTLLEGPGRPAADGIG). Residues 941–959 (DSPDSDSSLSSPHPTDTLS) are compositionally biased toward low complexity. Lys-991 is covalently cross-linked (Glycyl lysine isopeptide (Lys-Gly) (interchain with G-Cter in SUMO2)). Disordered stretches follow at residues 1046-1069 (LSQNQQSSSASTSQERSSNPAPRR) and 1084-1104 (FQHGSPLHSTGHPHLAPAPAH). 2 stretches are compositionally biased toward low complexity: residues 1047–1063 (SQNQQSSSASTSQERSS) and 1095–1104 (HPHLAPAPAH). The residue at position 1200 (Ser-1200) is a Phosphoserine. A Glycyl lysine isopeptide (Lys-Gly) (interchain with G-Cter in SUMO) cross-link involves residue Lys-1203.

It belongs to the protein kinase superfamily. CMGC Ser/Thr protein kinase family. HIPK subfamily. As to quaternary structure, interacts with Nkx1-2, Nkx2-5, MYB, PARK7, DAXX and p53/TP53. Part of a cytoplasmic complex made of HIPK1, DAB2IP and MAP3K5 in response to TNF. This complex formation promotes MAP3K5-JNK activation and subsequent apoptosis. Post-translationally, phosphorylated and activated by JNK1. Autophosphorylated. Sumoylated. When conjugated it is directed to nuclear speckles. SENP1-mediated desumoylation is mediated by TNF in response to stress stimuli, triggering transient translocation from nucleus to cytoplasm. As to expression, ubiquitously expressed, with high levels in reproductive tissues. Expressed in the epithelial layer of mammary gland, uterus and epididymis, in the corpus luteum, and in post-meiotic round spermatids.

It localises to the nucleus. The protein localises to the cytoplasm. It is found in the nucleus speckle. It carries out the reaction L-seryl-[protein] + ATP = O-phospho-L-seryl-[protein] + ADP + H(+). The enzyme catalyses L-threonyl-[protein] + ATP = O-phospho-L-threonyl-[protein] + ADP + H(+). Serine/threonine-protein kinase involved in transcription regulation and TNF-mediated cellular apoptosis. Plays a role as a corepressor for homeodomain transcription factors. Phosphorylates DAXX and MYB. Phosphorylates DAXX in response to stress, and mediates its translocation from the nucleus to the cytoplasm. Inactivates MYB transcription factor activity by phosphorylation. Prevents MAP3K5-JNK activation in the absence of TNF. TNF triggers its translocation to the cytoplasm in response to stress stimuli, thus activating nuclear MAP3K5-JNK by derepression and promoting apoptosis. May be involved in anti-oxidative stress responses. Involved in the regulation of eye size, lens formation and retinal lamination during late embryogenesis. Promotes angiogenesis and to be involved in erythroid differentiation. May be involved in malignant squamous cell tumor formation. Phosphorylates PAGE4 at 'Thr-51' which is critical for the ability of PAGE4 to potentiate the transcriptional activator activity of JUN. The sequence is that of Homeodomain-interacting protein kinase 1 (Hipk1) from Mus musculus (Mouse).